Consider the following 126-residue polypeptide: Fluoride-specific ion channel FluC (126 aa).

4 helical membrane-spanning segments follow: residues 5–25 (ILCV…FYFG), 34–54 (YIFI…GFVL), 71–91 (VTGL…NAVF), and 100–120 (FFLN…LGIY). Residues Gly-76 and Thr-79 each coordinate Na(+).

Belongs to the fluoride channel Fluc/FEX (TC 1.A.43) family.

The protein localises to the cell inner membrane. It catalyses the reaction fluoride(in) = fluoride(out). Its activity is regulated as follows. Na(+) is not transported, but it plays an essential structural role and its presence is essential for fluoride channel function. Its function is as follows. Fluoride-specific ion channel. Important for reducing fluoride concentration in the cell, thus reducing its toxicity. The polypeptide is Fluoride-specific ion channel FluC (Campylobacter hominis (strain ATCC BAA-381 / DSM 21671 / CCUG 45161 / LMG 19568 / NCTC 13146 / CH001A)).